The following is a 365-amino-acid chain: Elongation factor Tu (365 aa).

Residues His-1–Thr-7, Asp-62–His-66, and Asn-117–Asp-120 contribute to the GTP site. The 185-residue stretch at His-1–Glu-185 folds into the tr-type G domain. Thr-7 is a Mg(2+) binding site.

This sequence belongs to the TRAFAC class translation factor GTPase superfamily. Classic translation factor GTPase family. EF-Tu/EF-1A subfamily. In terms of assembly, monomer.

The protein localises to the cytoplasm. It catalyses the reaction GTP + H2O = GDP + phosphate + H(+). GTP hydrolase that promotes the GTP-dependent binding of aminoacyl-tRNA to the A-site of ribosomes during protein biosynthesis. The polypeptide is Elongation factor Tu (Buchnera aphidicola subsp. Schlechtendalia chinensis).